The following is a 259-amino-acid chain: Peroxisomal membrane protein 11B (259 aa).

Residue lysine 43 is modified to N6-acetyllysine. An interaction with PEX19, PEX11G and FIS1 and peroxisome targeting region spans residues 211–259; that stretch reads VVRNACDLFIPLDKLGLWRCGPGIVGLCGLVSSILSILTLIYPWLRLKP. A helical membrane pass occupies residues 234 to 254; sequence IVGLCGLVSSILSILTLIYPW.

The protein belongs to the peroxin-11 family. Homodimer. Heterodimer with PEX11G. Interacts with PEX19. Interacts with FIS1.

It localises to the peroxisome membrane. Its function is as follows. Involved in peroxisomal proliferation. May regulate peroxisome division by recruiting the dynamin-related GTPase DNM1L to the peroxisomal membrane. Promotes membrane protrusion and elongation on the peroxisomal surface. The chain is Peroxisomal membrane protein 11B (PEX11B) from Pongo abelii (Sumatran orangutan).